A 343-amino-acid chain; its full sequence is Probable 3',5'-cyclic-nucleotide phosphodiesterase (343 aa).

The N-terminal stretch at 1 to 36 (MKYLSIKSASDKIKSGLLKTGVILSFSLFSSLSTAA) is a signal peptide.

It belongs to the cyclic nucleotide phosphodiesterase class-II family.

The protein localises to the periplasm. It catalyses the reaction a nucleoside 3',5'-cyclic phosphate + H2O = a nucleoside 5'-phosphate + H(+). The chain is Probable 3',5'-cyclic-nucleotide phosphodiesterase (cpdP) from Yersinia pestis.